Reading from the N-terminus, the 187-residue chain is Peptidoglycan-recognition protein 2 (187 aa).

An N-terminal signal peptide occupies residues 1-19 (MKAFLVALVVAIELTLVFA). Intrachain disulfides connect Cys21–Cys144 and Cys58–Cys64. Residues 43-170 (KPLKYVIIHH…RTVRPTDSPG (128 aa)) enclose the N-acetylmuramoyl-L-alanine amidase domain.

The protein belongs to the N-acetylmuramoyl-L-alanine amidase 2 family. Localizes to plasma (at protein level).

The protein localises to the secreted. Functionally, peptidoglycan-recognition protein probably involved in innate immunity by binding to peptidoglycans (PGN) of bacteria and activating the prophenoloxidase (proPO) cascade immune response. Binds to 1,3-beta-D-glucan and PGN. This chain is Peptidoglycan-recognition protein 2 (PGRP-2), found in Holotrichia diomphalia (Korean black chafer).